The following is a 395-amino-acid chain: Cyclin-A2 (395 aa).

The disordered stretch occupies residues 1–93 (MLAEQENQEN…EEAADAPGLR (93 aa)). Residues 27–60 (ALGLLRGGPARPGPAAQAARNGEGRGAAAGQQQQ) are compositionally biased toward low complexity.

Belongs to the cyclin family. Cyclin AB subfamily. Interacts with the CDK1 and CDK2 protein kinases to form serine/threonine kinase holoenzyme complexes.

It is found in the nucleus. It localises to the cytoplasm. Functionally, cyclin which controls both the G1/S and the G2/M transition phases of the cell cycle. Functions through the formation of specific serine/threonine kinase holoenzyme complexes with the cyclin-dependent protein kinases CDK1 and CDK2. The cyclin subunit confers the substrate specificity of these complexes and differentially interacts with and activates CDK1 and CDK2 throughout the cell cycle. The sequence is that of Cyclin-A2 from Gallus gallus (Chicken).